Here is a 316-residue protein sequence, read N- to C-terminus: GPI-specific phospholipase A2-like PGAP3 (316 aa).

The first 18 residues, 1-18, serve as a signal peptide directing secretion; the sequence is MAPFLVLFLAGVVAASRG. The Lumenal segment spans residues 19–93; sequence DREPVYRDCV…QFHGKWPFSR (75 aa). An N-linked (GlcNAc...) asparagine glycan is attached at N35. A helical membrane pass occupies residues 94-114; it reads FLFFQEPASALASFLNGVASL. The Cytoplasmic segment spans residues 115–132; sequence LMLLRYRSSVPSSCQMYR. The helical transmembrane segment at 133–153 threads the bilayer; the sequence is TCLAFSMVSVNAWFWSTIFHT. Topologically, residues 154–163 are lumenal; that stretch reads RDTALTEKMD. The helical transmembrane segment at 164–180 threads the bilayer; the sequence is YFCASSVILHSIYLCCM. Residues 181–182 are Cytoplasmic-facing; that stretch reads RT. A helical transmembrane segment spans residues 183-203; the sequence is FGLQYPSIANGFGAFLVLLFA. Residues 204–218 lie on the Lumenal side of the membrane; it reads CHVSYLTLGRFDYSY. The chain crosses the membrane as a helical span at residues 219 to 239; it reads NMAANTGFGVLNLMWWLAWCF. Residues 240-251 are Cytoplasmic-facing; that stretch reads RRRFHQPYLWKC. The helical transmembrane segment at 252-272 threads the bilayer; it reads VLVVISLQSLALLELLDFPPV. A topological domain (lumenal) is located at residue M273. Residues 274–293 traverse the membrane as a helical segment; sequence WILDAHALWHFSTVPLHFLF. The Cytoplasmic portion of the chain corresponds to 294–316; sequence YSFLKDDSLYLLKINHDDIPKLD.

The protein belongs to the PGAP3 family.

The protein localises to the golgi apparatus membrane. Involved in the fatty acid remodeling steps of GPI-anchor maturation where the unsaturated acyl chain at sn-2 of inositol phosphate is replaced by a saturated stearoyl chain. May catalyze the first step of the fatty acid remodeling, by removing the unsaturated acyl chain at sn-2 of inositol phosphate, generating a lyso-GPI intermediate. The fatty acid remodeling steps is critical for the integration of GPI-APs into lipid rafts. The chain is GPI-specific phospholipase A2-like PGAP3 from Xenopus tropicalis (Western clawed frog).